Consider the following 93-residue polypeptide: AYKVTLKTPDGDITFDVEPGERLIDIGSEKADLPLSCQAGACSTCLGKIVSGTVDQSEGSFLDDEQIEQGYVLTCIAIPESDVVIETHKEDEL.

The 90-residue stretch at 2-91 (YKVTLKTPDG…DVVIETHKED (90 aa)) folds into the 2Fe-2S ferredoxin-type domain. Residues C37, C42, C45, and C75 each coordinate [2Fe-2S] cluster.

The protein belongs to the 2Fe2S plant-type ferredoxin family. It depends on [2Fe-2S] cluster as a cofactor.

It is found in the plastid. Its subcellular location is the chloroplast. Its function is as follows. Ferredoxins are iron-sulfur proteins that transfer electrons in a wide variety of metabolic reactions. In Equisetum arvense (Field horsetail), this protein is Ferredoxin-2.